A 46-amino-acid chain; its full sequence is MKSKIALSCEKCKIKNYKTNKSIIERLELKKFCSRCKEHTIHKEEK.

It belongs to the bacterial ribosomal protein bL33 family.

In Mycoplasmopsis pulmonis (strain UAB CTIP) (Mycoplasma pulmonis), this protein is Large ribosomal subunit protein bL33B (rpmG2).